The chain runs to 138 residues: MVAQRTFVMIKPDGVKRGLIGEIISRFEKRGLKIVSLKMVKMSRDTAEKLYEEHKGKSFFEELVNYVTSGPVVCMVIEGDDVVQVIRRMIGNTDPKEAPPGTIRGDYALSKSENVIHASDSIEKAQREMSLFFDKSDL.

Positions 11, 59, 87, 93, 104, and 114 each coordinate ATP. Histidine 117 serves as the catalytic Pros-phosphohistidine intermediate.

It belongs to the NDK family. The cofactor is Mg(2+).

The protein localises to the cytoplasm. The enzyme catalyses a 2'-deoxyribonucleoside 5'-diphosphate + ATP = a 2'-deoxyribonucleoside 5'-triphosphate + ADP. It catalyses the reaction a ribonucleoside 5'-diphosphate + ATP = a ribonucleoside 5'-triphosphate + ADP. In terms of biological role, major role in the synthesis of nucleoside triphosphates other than ATP. The ATP gamma phosphate is transferred to the NDP beta phosphate via a ping-pong mechanism, using a phosphorylated active-site intermediate. The protein is Nucleoside diphosphate kinase of Saccharolobus solfataricus (strain ATCC 35092 / DSM 1617 / JCM 11322 / P2) (Sulfolobus solfataricus).